Consider the following 64-residue polypeptide: Small ribosomal subunit protein eS17 (64 aa).

It belongs to the eukaryotic ribosomal protein eS17 family.

This is Small ribosomal subunit protein eS17 from Methanosarcina acetivorans (strain ATCC 35395 / DSM 2834 / JCM 12185 / C2A).